A 504-amino-acid polypeptide reads, in one-letter code: L-carnitine/gamma-butyrobetaine antiporter (504 aa).

12 helical membrane-spanning segments follow: residues 10-30, 51-71, 92-112, 143-163, 195-215, 231-251, 263-283, 316-336, 347-367, 398-418, 446-466, and 475-495; these read MEPKVFFPPLIIVGILCWLTV, WGWAFEWYMVVMLFGWFWLVF, IFMMFASCTSAAVLFWGSIEI, GPLPWATYSFLSVAFAYFFFV, FYLVALIFAMGTSLGLATPLV, LDAIIITCWIILNAICVACGL, SYLSFLMLGWVFIVSGASFIM, WSVFYWAWWVIYAIQMSIFLA, LCFGMVLGLTASTWILWTVLG, WAALPLSTATMWGFFILCFIA, LLVRIGWSILVGIIGIVLLAL, and AIIAGGCPLFFVNIMVTLSFI.

It belongs to the BCCT transporter (TC 2.A.15) family. CaiT subfamily. Homotrimer.

The protein resides in the cell inner membrane. It catalyses the reaction 4-(trimethylamino)butanoate(in) + (R)-carnitine(out) = 4-(trimethylamino)butanoate(out) + (R)-carnitine(in). It functions in the pathway amine and polyamine metabolism; carnitine metabolism. Its function is as follows. Catalyzes the exchange of L-carnitine for gamma-butyrobetaine. The polypeptide is L-carnitine/gamma-butyrobetaine antiporter (Shigella dysenteriae serotype 1 (strain Sd197)).